Here is a 589-residue protein sequence, read N- to C-terminus: Inactive poly [ADP-ribose] polymerase RCD1 (589 aa).

Residues 64–153 (KLSAYENRSG…ETGAKTPLAW (90 aa)) enclose the WWE domain. Positions 248–469 (EAAVSKWDET…LIAKRDNSGV (222 aa)) constitute a PARP catalytic domain. Disordered stretches follow at residues 464–504 (RDNS…TRPK) and 569–589 (QPKS…AGGL). Residues 481–503 (LESNQGARGSGSANSVGSSTTRP) are compositionally biased toward polar residues. In terms of domain architecture, RST spans 501 to 572 (TRPKSPWMPF…ITTLQNQPKS (72 aa)). The span at 571 to 589 (KSKEIPGSIRDHEEGAGGL) shows a compositional bias: basic and acidic residues.

As to quaternary structure, interacts with the transcription factors NAC013/NTL1 and NAC046. Interacts with dehydration-responsive DREB2 proteins and a number of transcription factors belonging to several protein families. Interacts with turnip crinkle virus (TCV) movement protein P8. In terms of tissue distribution, expressed in young developing tissues, such as young leaves and flowers and root tips. In mature plants, expressed in vasculature of leaves and roots, and guard cells.

The protein resides in the nucleus matrix. In terms of biological role, inactive ADP-ribosyltransferase that functions with SRO1 to regulate oxidative stress, hormonal and developmental responses. Required for embryogenesis, vegetative and reproductive development, and abiotic stress responses. May regulate several stress-responsive genes. Seems to play a larger developmental role than SRO1. Does not bind NAD in vitro. In Arabidopsis thaliana (Mouse-ear cress), this protein is Inactive poly [ADP-ribose] polymerase RCD1 (RCD1).